The following is a 360-amino-acid chain: Archaemetzincin-2 (360 aa).

Histidine 254 provides a ligand contact to Zn(2+). Glutamate 255 (proton acceptor) is an active-site residue. 6 residues coordinate Zn(2+): histidine 258, histidine 264, cysteine 265, cysteine 270, cysteine 289, and cysteine 292.

The protein belongs to the peptidase M54 family. Zn(2+) serves as cofactor. In terms of tissue distribution, down-regulated in testis from patients with maturation arrest (MA) or Sertoli cell-only syndrome (SCOS).

Its function is as follows. Probable zinc metalloprotease. The protein is Archaemetzincin-2 (AMZ2) of Homo sapiens (Human).